A 440-amino-acid polypeptide reads, in one-letter code: Branched-chain amino acid permease BrnQ (440 aa).

12 consecutive transmembrane segments (helical) span residues 9-29 (YIII…NLIF), 46-66 (AGFL…FVFS), 80-100 (PVFG…FFAI), 121-141 (SPVS…LLSL), 149-169 (IVGK…VAVA), 196-216 (GYLT…VNAL), 227-247 (LIVV…VMYT), 284-304 (ILLG…LITA), 321-341 (IAVV…TQLI), 348-368 (LLTM…HSVF), 378-398 (SLLF…GIKI), and 414-434 (IGLG…ILSI).

This sequence belongs to the branched chain amino acid transporter family.

The protein localises to the cell membrane. Functionally, branched-chain amino acid transport system which is involved in the uptake of isoleucine and valine. Probably does not transport leucine. Together with BcaP and BraB, plays an important role in the activation of CodY, a branched-chain amino acid-responsive transcriptional regulator that controls the expression of several dozen transcription units in B.subtilis. This chain is Branched-chain amino acid permease BrnQ, found in Bacillus subtilis (strain 168).